The sequence spans 260 residues: tRNA (guanine-N(1)-)-methyltransferase (260 aa).

Residues glycine 117 and 137 to 142 (LGDFVL) contribute to the S-adenosyl-L-methionine site.

This sequence belongs to the RNA methyltransferase TrmD family. Homodimer.

The protein localises to the cytoplasm. The enzyme catalyses guanosine(37) in tRNA + S-adenosyl-L-methionine = N(1)-methylguanosine(37) in tRNA + S-adenosyl-L-homocysteine + H(+). Specifically methylates guanosine-37 in various tRNAs. The sequence is that of tRNA (guanine-N(1)-)-methyltransferase from Cupriavidus metallidurans (strain ATCC 43123 / DSM 2839 / NBRC 102507 / CH34) (Ralstonia metallidurans).